Consider the following 373-residue polypeptide: Centrosomal protein of 41 kDa (373 aa).

Positions 89-137 (QRLEDNDSAASDPDAETTARTNGKGNPGEQSPSPEQFINNAGAGDSSRS) are disordered. A phosphoserine mark is found at S96 and S99. The span at 106-127 (TARTNGKGNPGEQSPSPEQFIN) shows a compositional bias: polar residues. T109 carries the phosphothreonine modification. Position 121 is a phosphoserine (S121). The Rhodanese domain occupies 169–266 (PDCPFLLLDV…LAQKFPEGLI (98 aa)). Positions 275–373 (QQALPPGSAR…SGHLQGKPWK (99 aa)) are disordered. The span at 298–312 (NKWRFTPEDLKKIEY) shows a compositional bias: basic and acidic residues. R343 is modified (omega-N-methylarginine). Over residues 355–366 (SHSNPRSLSSGH) the composition is skewed to polar residues.

Belongs to the CEP41 family. Found in a complex with TTLL6. In terms of tissue distribution, expressed in testis and fetal tissues.

It is found in the cytoplasm. The protein localises to the cytoskeleton. The protein resides in the microtubule organizing center. Its subcellular location is the centrosome. It localises to the cell projection. It is found in the cilium. The protein localises to the cilium basal body. Its function is as follows. Required during ciliogenesis for tubulin glutamylation in cilium. Probably acts by participating in the transport of TTLL6, a tubulin polyglutamylase, between the basal body and the cilium. This Homo sapiens (Human) protein is Centrosomal protein of 41 kDa (CEP41).